The sequence spans 284 residues: 2-dehydro-3-deoxyphosphooctonate aldolase (284 aa).

Belongs to the KdsA family.

The protein localises to the cytoplasm. The enzyme catalyses D-arabinose 5-phosphate + phosphoenolpyruvate + H2O = 3-deoxy-alpha-D-manno-2-octulosonate-8-phosphate + phosphate. The protein operates within carbohydrate biosynthesis; 3-deoxy-D-manno-octulosonate biosynthesis; 3-deoxy-D-manno-octulosonate from D-ribulose 5-phosphate: step 2/3. Its pathway is bacterial outer membrane biogenesis; lipopolysaccharide biosynthesis. In Escherichia coli O157:H7, this protein is 2-dehydro-3-deoxyphosphooctonate aldolase.